Consider the following 570-residue polypeptide: High-affinity hexose transporter HXT7 (570 aa).

Topologically, residues 1-60 (MSQDAAIAEQTPVEHLSAVDSASHSVLSTPSNKAERDEIKAYGEGEEHEPVVEIPKRPAS) are cytoplasmic. The helical transmembrane segment at 61 to 81 (AYVTVSIMCIMIAFGGFVFGW) threads the bilayer. Residues 82–116 (DTGTISGFINQTDFIRRFGMKHKDGTNYLSKVRTG) lie on the Extracellular side of the membrane. N91 carries an N-linked (GlcNAc...) asparagine glycan. The helical transmembrane segment at 117-137 (LIVSIFNIGCAIGGIILSKLG) threads the bilayer. Topologically, residues 138 to 143 (DMYGRK) are cytoplasmic. The helical transmembrane segment at 144-164 (VGLIVVVVIYIIGIIIQIASI) threads the bilayer. The Extracellular segment spans residues 165 to 174 (NKWYQYFIGR). The chain crosses the membrane as a helical span at residues 175–195 (IISGLGVGGIAVLSPMLISEV). Residues 196-201 (SPKHLR) are Cytoplasmic-facing. Residues 202-222 (GTLVSCYQLMITAGIFLGYCT) traverse the membrane as a helical segment. Over 223–236 (NFGTKNYSNSVQWR) the chain is Extracellular. An N-linked (GlcNAc...) asparagine glycan is attached at N228. Residues 237 to 257 (VPLGLCFAWALFMIGGMTFVP) form a helical membrane-spanning segment. Topologically, residues 258–340 (ESPRYLAEVG…IQSLQQLTGD (83 aa)) are cytoplasmic. A helical membrane pass occupies residues 341–357 (NYFFYYGTTIFKAVGLS). At 358–363 (DSFETS) the chain is on the extracellular side. Residues 364-381 (IVLGIVNFASTFVGIYVV) traverse the membrane as a helical segment. Over 382 to 388 (ERYGRRT) the chain is Cytoplasmic. The chain crosses the membrane as a helical span at residues 389–409 (CLLWGAASMTACMVVYASVGV). Residues 410 to 431 (TRLWPNGQDQPSSKGAGNCMIV) lie on the Extracellular side of the membrane. The chain crosses the membrane as a helical span at residues 432 to 452 (FACFYIFCFATTWAPIPYVVV). The Cytoplasmic portion of the chain corresponds to 453 to 469 (SETFPLRVKSKAMSIAT). The chain crosses the membrane as a helical span at residues 470 to 490 (AANWLWGFLIGFFTPFITGAI). A topological domain (extracellular) is located at residue N491. A helical transmembrane segment spans residues 492-512 (FYYGYVFMGCLVFMFFYVLLV). Residues 513–570 (VPETKGLTLEEVNTMWEEGVLPWKSASWVPPSRRGANYDAEEMTHDDKPLYKRMFSTK) are Cytoplasmic-facing. T556 is subject to Phosphothreonine. K560 participates in a covalent cross-link: Glycyl lysine isopeptide (Lys-Gly) (interchain with G-Cter in ubiquitin).

Belongs to the major facilitator superfamily. Sugar transporter (TC 2.A.1.1) family.

Its subcellular location is the membrane. Functionally, high-affinity glucose transporter. The polypeptide is High-affinity hexose transporter HXT7 (HXT7) (Saccharomyces cerevisiae (strain ATCC 204508 / S288c) (Baker's yeast)).